A 415-amino-acid chain; its full sequence is Branched-chain-amino-acid aminotransferase 5, chloroplastic (415 aa).

The N-terminal 65 residues, 1-65, are a transit peptide targeting the chloroplast; the sequence is MERSAVASGF…IVSEVSRNRR (65 aa). Residue Lys-261 is modified to N6-(pyridoxal phosphate)lysine.

Belongs to the class-IV pyridoxal-phosphate-dependent aminotransferase family. Pyridoxal 5'-phosphate serves as cofactor.

Its subcellular location is the plastid. It is found in the chloroplast. The catalysed reaction is L-leucine + 2-oxoglutarate = 4-methyl-2-oxopentanoate + L-glutamate. It carries out the reaction L-isoleucine + 2-oxoglutarate = (S)-3-methyl-2-oxopentanoate + L-glutamate. It catalyses the reaction L-valine + 2-oxoglutarate = 3-methyl-2-oxobutanoate + L-glutamate. It functions in the pathway amino-acid biosynthesis; L-isoleucine biosynthesis; L-isoleucine from 2-oxobutanoate: step 4/4. The protein operates within amino-acid biosynthesis; L-leucine biosynthesis; L-leucine from 3-methyl-2-oxobutanoate: step 4/4. It participates in amino-acid biosynthesis; L-valine biosynthesis; L-valine from pyruvate: step 4/4. In terms of biological role, converts 2-oxo acids to branched-chain amino acids. Acts on leucine, isoleucine and valine. This Arabidopsis thaliana (Mouse-ear cress) protein is Branched-chain-amino-acid aminotransferase 5, chloroplastic (BCAT5).